Here is a 732-residue protein sequence, read N- to C-terminus: Prolyl endopeptidase-like (732 aa).

Active-site charge relay system residues include Ser575, Asp661, and His707.

The protein belongs to the peptidase S9A family. In terms of assembly, homodimer.

It localises to the cytoplasm. The protein localises to the cytosol. Functionally, serine peptidase whose precise substrate specificity remains unclear. Does not cleave peptides after a arginine or lysine residue. Regulates trans-Golgi network morphology and sorting by regulating the membrane binding of the AP-1 complex. May play a role in the regulation of synaptic vesicle exocytosis. This is Prolyl endopeptidase-like (PREPL) from Gallus gallus (Chicken).